The following is a 601-amino-acid chain: Glutathione-regulated potassium-efflux system protein KefB (601 aa).

13 helical membrane-spanning segments follow: residues Ser-4–Ala-24, Ile-29–Phe-49, Glu-55–Leu-75, Ile-87–Met-107, Ala-115–Met-135, Val-152–Gly-172, His-177–Gly-197, Phe-207–Gly-227, Leu-230–Leu-250, Gly-268–Tyr-288, Leu-291–Leu-311, Met-324–Ala-344, and Ala-356–Val-376. The RCK N-terminal domain maps to Lys-400–Thr-519.

The protein belongs to the monovalent cation:proton antiporter 2 (CPA2) transporter (TC 2.A.37) family. KefB subfamily. Interacts with the regulatory subunit KefG.

Its subcellular location is the cell inner membrane. In terms of biological role, pore-forming subunit of a potassium efflux system that confers protection against electrophiles. Catalyzes K(+)/H(+) antiport. This is Glutathione-regulated potassium-efflux system protein KefB from Escherichia coli O17:K52:H18 (strain UMN026 / ExPEC).